Reading from the N-terminus, the 68-residue chain is Large ribosomal subunit protein bL35 (68 aa).

This sequence belongs to the bacterial ribosomal protein bL35 family.

In Wolbachia pipientis subsp. Culex pipiens (strain wPip), this protein is Large ribosomal subunit protein bL35.